The sequence spans 76 residues: uncharacterized protein (76 aa).

A helical transmembrane segment spans residues 53–70; that stretch reads STKLHIIWFCIFAIFIAV.

The protein localises to the membrane. This is an uncharacterized protein from Haemophilus influenzae (strain ATCC 51907 / DSM 11121 / KW20 / Rd).